The chain runs to 344 residues: Beta-1,4-galactosyltransferase 4 (344 aa).

Residues 1 to 12 (MGCNPPYHLSYR) are Cytoplasmic-facing. The chain crosses the membrane as a helical; Signal-anchor for type II membrane protein span at residues 13 to 38 (LRLLLLFTLCLTVVGWATSNYFVGAI). The Lumenal segment spans residues 39–344 (QVIPKAKDFM…NITVDFWTAA (306 aa)). An intrachain disulfide couples cysteine 77 to cysteine 118. Residues 129 to 133 (PHRNR), 168 to 170 (FNR), and 195 to 196 (VD) each bind UDP-alpha-D-galactose. The cysteines at positions 189 and 208 are disulfide-linked. Aspartate 196 contributes to the Mn(2+) binding site. An N-linked (GlcNAc...) asparagine glycan is attached at asparagine 220. Tyrosine 224 and tryptophan 256 together coordinate UDP-alpha-D-galactose. Residue 258–261 (GEDD) participates in N-acetyl-D-glucosamine binding. Histidine 289 contributes to the Mn(2+) binding site. 289–291 (HTR) contributes to the UDP-alpha-D-galactose binding site. N-acetyl-D-glucosamine is bound at residue arginine 301. Residue asparagine 335 is glycosylated (N-linked (GlcNAc...) asparagine).

Belongs to the glycosyltransferase 7 family. Interacts with SLC35A2/UGT1. Requires Mn(2+) as cofactor.

The protein localises to the golgi apparatus membrane. The protein resides in the secreted. It catalyses the reaction N-acetyl-D-glucosamine + UDP-alpha-D-galactose = beta-D-galactosyl-(1-&gt;4)-N-acetyl-D-glucosamine + UDP + H(+). The catalysed reaction is a beta-D-GlcNAc-(1-&gt;3)-beta-D-Gal-(1-&gt;4)-beta-D-Glc-(1&lt;-&gt;1)-Cer(d18:1(4E)) + UDP-alpha-D-galactose = a neolactoside nLc4Cer(d18:1(4E)) + UDP + H(+). It carries out the reaction 3-O-{beta-D-galactosyl-(1-&gt;3)-[6-O-sulfo-N-acetyl-beta-D-glucosaminyl-(1-&gt;6)]-N-acetyl-alpha-D-galactosaminyl}-L-seryl-[protein] + UDP-alpha-D-galactose = 3-O-{beta-D-galactosyl-(1-&gt;3)-[beta-D-galactosyl-(1-&gt;4)-6-O-sulfo-N-acetyl-beta-D-glucosaminyl-(1-&gt;6)]-N-acetyl-alpha-D-galactosaminyl}-L-seryl-[protein] + UDP + H(+). The enzyme catalyses 3-O-{beta-D-galactosyl-(1-&gt;3)-[6-O-sulfo-N-acetyl-beta-D-glucosaminyl-(1-&gt;6)]-N-acetyl-alpha-D-galactosaminyl}-L-threonyl-[protein] + UDP-alpha-D-galactose = 3-O-{beta-D-galactosyl-(1-&gt;3)-[beta-D-galactosyl-(1-&gt;4)-6-O-sulfo-N-acetyl-beta-D-glucosaminyl-(1-&gt;6)]-N-acetyl-alpha-D-galactosaminyl}-L-threonyl-[protein] + UDP + H(+). The protein operates within protein modification; protein glycosylation. It participates in glycolipid biosynthesis. Functionally, galactose (Gal) transferase involved in the synthesis of terminal N-acetyllactosamine (LacNac) unit present on glycan chains of glycoproteins and glycosphingolipids. Catalyzes the transfer of Gal residue via a beta1-&gt;4 linkage from UDP-Gal to the non-reducing terminal N-acetyl glucosamine 6-O-sulfate (6-O-sulfoGlcNAc) in the linearly growing chain of both N- and O-linked keratan sulfate proteoglycans. Cooperates with B3GNT7 N-acetyl glucosamine transferase and CHST6 and CHST1 sulfotransferases to construct and elongate mono- and disulfated disaccharide units [-&gt;3Galbeta1-&gt;4(6-sulfoGlcNAcbeta)1-&gt;] and [-&gt;3(6-sulfoGalbeta)1-&gt;4(6-sulfoGlcNAcbeta)1-&gt;] within keratan sulfate polymer. Transfers Gal residue via a beta1-&gt;4 linkage to terminal 6-O-sulfoGlcNAc within the LacNac unit of core 2 O-glycans forming 6-sulfo-sialyl-Lewis X (sLex). May contribute to the generation of sLex epitope on mucin-type glycoproteins that serve as ligands for SELL/L-selectin, a major regulator of leukocyte migration. In the biosynthesis pathway of neolacto-series glycosphingolipids, transfers Gal residue via a beta1-&gt;4 linkage to terminal GlcNAc of a lactotriaosylceramide (Lc3Cer) acceptor to form a neolactotetraosylceramide. This chain is Beta-1,4-galactosyltransferase 4, found in Mus musculus (Mouse).